The following is a 319-amino-acid chain: MKKIGVLTSGGDSPGMNATIRAVVRRGIYMGLDIYGIYYGFSGLINGNIEKLEIGSVGDIIHRGGTILHTSRSEEFKTEMGQQKGFDNLKELGIEGLIVIGGDGSFKGAEKLSQMGLPVIGVPGTIDNDIPETEMSIGFDTALNTVIEAIDRIRDTATSHERIFVIEVMGRDCGNLALWSGLAGGAESVLIPEIDYDMEKVIERLKHGYKRGKKHSIIIVAEGVKPGAEIGKEIKERAGLDNRVTVLGHVQRGGTPTAYDRMLGSRLGAKAVDLLVAGESDKMIGMRDYKLVPVQFKDVFSKIEEPDYDIYELSQSLSI.

Gly-11 contacts ATP. 21 to 25 (RAVVR) is a binding site for ADP. Residues 72-73 (RS) and 102-105 (GDGS) contribute to the ATP site. Asp-103 is a Mg(2+) binding site. Residue 125 to 127 (TID) participates in substrate binding. Asp-127 serves as the catalytic Proton acceptor. Residue Arg-154 coordinates ADP. Residues Arg-162 and 169-171 (MGR) each bind substrate. Residues 185 to 187 (GAE), Arg-211, and 213 to 215 (KKH) contribute to the ADP site. Substrate contacts are provided by residues Glu-222, Arg-243, and 249–252 (HVQR).

This sequence belongs to the phosphofructokinase type A (PFKA) family. ATP-dependent PFK group I subfamily. Prokaryotic clade 'B1' sub-subfamily. As to quaternary structure, homotetramer. It depends on Mg(2+) as a cofactor.

The protein localises to the cytoplasm. It catalyses the reaction beta-D-fructose 6-phosphate + ATP = beta-D-fructose 1,6-bisphosphate + ADP + H(+). The protein operates within carbohydrate degradation; glycolysis; D-glyceraldehyde 3-phosphate and glycerone phosphate from D-glucose: step 3/4. Its activity is regulated as follows. Allosterically activated by ADP and other diphosphonucleosides, and allosterically inhibited by phosphoenolpyruvate. In terms of biological role, catalyzes the phosphorylation of D-fructose 6-phosphate to fructose 1,6-bisphosphate by ATP, the first committing step of glycolysis. This Natranaerobius thermophilus (strain ATCC BAA-1301 / DSM 18059 / JW/NM-WN-LF) protein is ATP-dependent 6-phosphofructokinase.